We begin with the raw amino-acid sequence, 254 residues long: Trans-aconitate 2-methyltransferase (254 aa).

The protein belongs to the methyltransferase superfamily. Tam family.

It is found in the cytoplasm. The enzyme catalyses trans-aconitate + S-adenosyl-L-methionine = (E)-3-(methoxycarbonyl)pent-2-enedioate + S-adenosyl-L-homocysteine. Catalyzes the S-adenosylmethionine monomethyl esterification of trans-aconitate. The polypeptide is Trans-aconitate 2-methyltransferase (Rhodococcus jostii (strain RHA1)).